A 260-amino-acid chain; its full sequence is Cytochrome c oxidase subunit 3 (260 aa).

The next 6 membrane-spanning stretches (helical) occupy residues 30–50 (LILW…VLLV), 81–101 (GMIL…WAFF), 126–146 (FLVP…VTWA), 158–178 (AIQS…LQAW), 196–216 (FFVA…FLAV), and 239–259 (WYWH…YWWG).

Belongs to the cytochrome c oxidase subunit 3 family. In terms of assembly, component of the cytochrome c oxidase (complex IV, CIV), a multisubunit enzyme composed of a catalytic core of 3 subunits and several supernumerary subunits. The complex exists as a monomer or a dimer and forms supercomplexes (SCs) in the inner mitochondrial membrane with ubiquinol-cytochrome c oxidoreductase (cytochrome b-c1 complex, complex III, CIII).

The protein resides in the mitochondrion inner membrane. It catalyses the reaction 4 Fe(II)-[cytochrome c] + O2 + 8 H(+)(in) = 4 Fe(III)-[cytochrome c] + 2 H2O + 4 H(+)(out). Component of the cytochrome c oxidase, the last enzyme in the mitochondrial electron transport chain which drives oxidative phosphorylation. The respiratory chain contains 3 multisubunit complexes succinate dehydrogenase (complex II, CII), ubiquinol-cytochrome c oxidoreductase (cytochrome b-c1 complex, complex III, CIII) and cytochrome c oxidase (complex IV, CIV), that cooperate to transfer electrons derived from NADH and succinate to molecular oxygen, creating an electrochemical gradient over the inner membrane that drives transmembrane transport and the ATP synthase. Cytochrome c oxidase is the component of the respiratory chain that catalyzes the reduction of oxygen to water. Electrons originating from reduced cytochrome c in the intermembrane space (IMS) are transferred via the dinuclear copper A center (CU(A)) of subunit 2 and heme A of subunit 1 to the active site in subunit 1, a binuclear center (BNC) formed by heme A3 and copper B (CU(B)). The BNC reduces molecular oxygen to 2 water molecules using 4 electrons from cytochrome c in the IMS and 4 protons from the mitochondrial matrix. This chain is Cytochrome c oxidase subunit 3 (COIII), found in Pisaster ochraceus (Ochre sea star).